The chain runs to 72 residues: Protein P13 (72 aa).

The protein resides in the virion membrane. In Pseudomonas phage phi6 (Bacteriophage phi-6), this protein is Protein P13 (P13).